Here is a 200-residue protein sequence, read N- to C-terminus: ATP-dependent Clp protease proteolytic subunit (200 aa).

Ser-98 (nucleophile) is an active-site residue. His-123 is a catalytic residue.

This sequence belongs to the peptidase S14 family. Fourteen ClpP subunits assemble into 2 heptameric rings which stack back to back to give a disk-like structure with a central cavity, resembling the structure of eukaryotic proteasomes.

It is found in the cytoplasm. It catalyses the reaction Hydrolysis of proteins to small peptides in the presence of ATP and magnesium. alpha-casein is the usual test substrate. In the absence of ATP, only oligopeptides shorter than five residues are hydrolyzed (such as succinyl-Leu-Tyr-|-NHMec, and Leu-Tyr-Leu-|-Tyr-Trp, in which cleavage of the -Tyr-|-Leu- and -Tyr-|-Trp bonds also occurs).. Functionally, cleaves peptides in various proteins in a process that requires ATP hydrolysis. Has a chymotrypsin-like activity. Plays a major role in the degradation of misfolded proteins. The chain is ATP-dependent Clp protease proteolytic subunit from Deinococcus geothermalis (strain DSM 11300 / CIP 105573 / AG-3a).